The following is a 279-amino-acid chain: S-formylglutathione hydrolase (279 aa).

Residues S150, D226, and H258 each act as charge relay system in the active site.

Belongs to the esterase D family.

It catalyses the reaction S-formylglutathione + H2O = formate + glutathione + H(+). Its function is as follows. Serine hydrolase involved in the detoxification of formaldehyde. Hydrolyzes S-formylglutathione to glutathione and formate. This is S-formylglutathione hydrolase (fghA) from Paracoccus denitrificans (strain Pd 1222).